Reading from the N-terminus, the 461-residue chain is Chromosomal replication initiator protein DnaA (461 aa).

Positions 1 to 83 are domain I, interacts with DnaA modulators; it reads MDHSPWQRCL…LRFDVGSKPT (83 aa). The domain II stretch occupies residues 83–124; the sequence is TIDNSVTNSPVSRNTGGNESLFAKATSAPKVAEPESNIPKKT. The tract at residues 125–341 is domain III, AAA+ region; it reads NVRLNYTFEN…GALNRVIANA (217 aa). ATP-binding residues include Gly-169, Gly-171, Lys-172, and Thr-173. The domain IV, binds dsDNA stretch occupies residues 342–461; it reads NFTGRAITID…YSNLIRTLSS (120 aa).

This sequence belongs to the DnaA family. Oligomerizes as a right-handed, spiral filament on DNA at oriC.

The protein localises to the cytoplasm. In terms of biological role, plays an essential role in the initiation and regulation of chromosomal replication. ATP-DnaA binds to the origin of replication (oriC) to initiate formation of the DNA replication initiation complex once per cell cycle. Binds the DnaA box (a 9 base pair repeat at the origin) and separates the double-stranded (ds)DNA. Forms a right-handed helical filament on oriC DNA; dsDNA binds to the exterior of the filament while single-stranded (ss)DNA is stabiized in the filament's interior. The ATP-DnaA-oriC complex binds and stabilizes one strand of the AT-rich DNA unwinding element (DUE), permitting loading of DNA polymerase. After initiation quickly degrades to an ADP-DnaA complex that is not apt for DNA replication. Binds acidic phospholipids. The chain is Chromosomal replication initiator protein DnaA from Colwellia psychrerythraea (strain 34H / ATCC BAA-681) (Vibrio psychroerythus).